Reading from the N-terminus, the 704-residue chain is 1,4-alpha-glucan-branching enzyme (704 aa).

Positions 94 and 131 each coordinate (1,4-alpha-D-glucosyl)n. Ser190 is subject to Phosphoserine. Residue Asp356 is the Nucleophile of the active site. Glu417 serves as the catalytic Proton donor.

The protein belongs to the glycosyl hydrolase 13 family. GlgB subfamily.

It localises to the cytoplasm. The catalysed reaction is Transfers a segment of a (1-&gt;4)-alpha-D-glucan chain to a primary hydroxy group in a similar glucan chain.. Its pathway is glycan biosynthesis; glycogen biosynthesis. Its function is as follows. Glycogen-branching enzyme participates in the glycogen biosynthetic process along with glycogenin and glycogen synthase. Generates alpha-1,6-glucosidic branches from alpha-1,4-linked glucose chains, to increase solubility of the glycogen polymer. The sequence is that of 1,4-alpha-glucan-branching enzyme (GLC3) from Saccharomyces cerevisiae (strain ATCC 204508 / S288c) (Baker's yeast).